The primary structure comprises 481 residues: Cobyric acid synthase (481 aa).

The 188-residue stretch at 248-435 folds into the GATase cobBQ-type domain; the sequence is ALTVAWLAFS…LHGMFGSDRF (188 aa). The active-site Nucleophile is the Cys-330. The active site involves His-427.

Belongs to the CobB/CobQ family. CobQ subfamily.

Its pathway is cofactor biosynthesis; adenosylcobalamin biosynthesis. Its function is as follows. Catalyzes amidations at positions B, D, E, and G on adenosylcobyrinic A,C-diamide. NH(2) groups are provided by glutamine, and one molecule of ATP is hydrogenolyzed for each amidation. The chain is Cobyric acid synthase from Cereibacter sphaeroides (strain ATCC 17025 / ATH 2.4.3) (Rhodobacter sphaeroides).